The sequence spans 416 residues: MIDRLAMIGVNVKTASREHVARLEKEWEKHLDTIGYASRGTVIIATCNRFEVYLDSPSRLVEDLASSIASPGGEGLVRLQGIDAARHLFRVASGLESQIIGDHEVLGQVRRAWLKSREKGFTTPLLDEVFHRALKTGARVRSESAISSGGVGYSSAAVSLAASLLGGGLDGARVGIVGAGMAAVGIARALCTRWRPRVVAVFNRTPERGWEVAGKCRGVESLVLPLDELAKLINELDALFVAIAGSTNILERGRVERGVSPRVIVDISNPPVTPKVAGRVFHMPEVEEEAKRMMEERLRWIPAAEAIIEEELEALLDALSRRRARESSRSVMRALSILAEREYERTLAGLRNGVDPREAVELALNSYTKKVGGALRRLLEEASDRGQLSLEDIEAILVSEFARIAENSGFKNGSTG.

Residues 46–49 (TCNR), Ser-97, 102–104 (DHE), and Gln-108 contribute to the substrate site. Catalysis depends on Cys-47, which acts as the Nucleophile. Residue 178–183 (GAGMAA) participates in NADP(+) binding.

The protein belongs to the glutamyl-tRNA reductase family. As to quaternary structure, homodimer.

It carries out the reaction (S)-4-amino-5-oxopentanoate + tRNA(Glu) + NADP(+) = L-glutamyl-tRNA(Glu) + NADPH + H(+). Its pathway is porphyrin-containing compound metabolism; protoporphyrin-IX biosynthesis; 5-aminolevulinate from L-glutamyl-tRNA(Glu): step 1/2. Its function is as follows. Catalyzes the NADPH-dependent reduction of glutamyl-tRNA(Glu) to glutamate 1-semialdehyde (GSA). This Aeropyrum pernix (strain ATCC 700893 / DSM 11879 / JCM 9820 / NBRC 100138 / K1) protein is Glutamyl-tRNA reductase.